The sequence spans 207 residues: MDKEKGLLIVLSGPSGVGKGTVRKKIFEDPTTSYKYSISMTTRHMREGEIDGVDYFFKTKEEFEALIKDDQFIEYAQYVGNYYGTPVQYVKDTMEEGHDVFLEIEVEGAKQVRKKFPDALFIFLAPPSLDDLRERLVGRGTESDEKIQSRVNEARKEVEMMNLYDYVVVNDEVELAKNRIQSIVEAEHLKRERIEAKYRKMLLEVKK.

The region spanning 6–185 (GLLIVLSGPS…AKNRIQSIVE (180 aa)) is the Guanylate kinase-like domain. 13–20 (GPSGVGKG) provides a ligand contact to ATP.

The protein belongs to the guanylate kinase family.

The protein localises to the cytoplasm. It catalyses the reaction GMP + ATP = GDP + ADP. In terms of biological role, essential for recycling GMP and indirectly, cGMP. In Staphylococcus epidermidis (strain ATCC 35984 / DSM 28319 / BCRC 17069 / CCUG 31568 / BM 3577 / RP62A), this protein is Guanylate kinase.